The primary structure comprises 338 residues: Ketol-acid reductoisomerase (NADP(+)) (338 aa).

Positions 1–181 (MKVFYDKDCD…GGGKAGIIET (181 aa)) constitute a KARI N-terminal Rossmann domain. NADP(+)-binding positions include 24–27 (YGSQ), arginine 47, and serine 52. Histidine 107 is a catalytic residue. Glycine 133 lines the NADP(+) pocket. A KARI C-terminal knotted domain is found at 182–327 (NFREETETDL…EKLRAMMPWI (146 aa)). 4 residues coordinate Mg(2+): aspartate 190, glutamate 194, glutamate 226, and glutamate 230. A substrate-binding site is contributed by serine 251.

It belongs to the ketol-acid reductoisomerase family. Mg(2+) is required as a cofactor.

It carries out the reaction (2R)-2,3-dihydroxy-3-methylbutanoate + NADP(+) = (2S)-2-acetolactate + NADPH + H(+). The enzyme catalyses (2R,3R)-2,3-dihydroxy-3-methylpentanoate + NADP(+) = (S)-2-ethyl-2-hydroxy-3-oxobutanoate + NADPH + H(+). Its pathway is amino-acid biosynthesis; L-isoleucine biosynthesis; L-isoleucine from 2-oxobutanoate: step 2/4. It participates in amino-acid biosynthesis; L-valine biosynthesis; L-valine from pyruvate: step 2/4. Its function is as follows. Involved in the biosynthesis of branched-chain amino acids (BCAA). Catalyzes an alkyl-migration followed by a ketol-acid reduction of (S)-2-acetolactate (S2AL) to yield (R)-2,3-dihydroxy-isovalerate. In the isomerase reaction, S2AL is rearranged via a Mg-dependent methyl migration to produce 3-hydroxy-3-methyl-2-ketobutyrate (HMKB). In the reductase reaction, this 2-ketoacid undergoes a metal-dependent reduction by NADPH to yield (R)-2,3-dihydroxy-isovalerate. This chain is Ketol-acid reductoisomerase (NADP(+)), found in Polaromonas sp. (strain JS666 / ATCC BAA-500).